A 392-amino-acid chain; its full sequence is Pannexin-3 (392 aa).

Topologically, residues 1 to 39 (MSLAHTAAEYMLSDALLPDRRGPRLKGLRLELPLDRIVK) are cytoplasmic. Residues 40 to 60 (FVAVGSPLLLMSLAFAQEFSS) traverse the membrane as a helical segment. Topologically, residues 61–113 (GSPISCFSPSNFSIRQAAYVDSSCWDSLLHHKQDGPGQDKMKSLWPHKALPYS) are extracellular. Residue N71 is glycosylated (N-linked (GlcNAc...) asparagine). Residues 114-134 (LLALALLMYLPVLLWQYAAVP) traverse the membrane as a helical segment. Residues 135–215 (ALSSDLLFII…VATYLLRNSL (81 aa)) are Cytoplasmic-facing. A helical membrane pass occupies residues 216 to 236 (LLIFTSATYLYLGHFHLDVFF). Residues 237–267 (QEEFSCSIKTGLLSDETHVPNLITCRLTSLS) lie on the Extracellular side of the membrane. Residues 268-288 (IFQIVSLSSVAIYTILVPVII) traverse the membrane as a helical segment. At 289–392 (YNLTRLCRWD…LTNSACDEHP (104 aa)) the chain is on the cytoplasmic side.

The protein belongs to the pannexin family. Homoheptameric.

It is found in the cell membrane. The protein resides in the cell junction. It localises to the gap junction. The protein localises to the endoplasmic reticulum membrane. It catalyses the reaction Ca(2+)(in) = Ca(2+)(out). It carries out the reaction ATP(in) = ATP(out). In terms of biological role, regulator of osteoblast differentiation by functionning as a Ca(2+) channel in the endoplasmic reticulum which regulates calmodulin (CaM) pathways. Allows ATP release into the extracellular space and activation or purinergic receptors. The protein is Pannexin-3 of Homo sapiens (Human).